The chain runs to 152 residues: Transcription elongation factor Spt5 (152 aa).

A KOW domain is found at 99 to 128 (PGDVVEVISGPFRGTQAQVIRVEEAKGEVV).

The protein belongs to the archaeal Spt5 family. In terms of assembly, heterodimer composed of Spt4 and Spt5. Interacts with RNA polymerase (RNAP).

In terms of biological role, stimulates transcription elongation. The chain is Transcription elongation factor Spt5 from Saccharolobus solfataricus (strain ATCC 35092 / DSM 1617 / JCM 11322 / P2) (Sulfolobus solfataricus).